Consider the following 228-residue polypeptide: Cytidylate kinase (228 aa).

G17–T25 provides a ligand contact to ATP.

This sequence belongs to the cytidylate kinase family. Type 1 subfamily.

It is found in the cytoplasm. It catalyses the reaction CMP + ATP = CDP + ADP. It carries out the reaction dCMP + ATP = dCDP + ADP. This is Cytidylate kinase from Burkholderia thailandensis (strain ATCC 700388 / DSM 13276 / CCUG 48851 / CIP 106301 / E264).